The primary structure comprises 541 residues: Phenazine N-monooxygenase PhzNO1 (541 aa).

Residues aspartate 39, 47-50 (TWYW), 59-60 (DT), tyrosine 65, and isoleucine 112 each bind FAD. 57-59 (RAD) serves as a coordination point for NADP(+). NADP(+) contacts are provided by residues 186–192 (TGSTGVQ), 209–210 (RS), and tryptophan 492.

This sequence belongs to the FAD-binding monooxygenase family. FAD is required as a cofactor.

The enzyme catalyses 1,6-dihydroxyphenazine + NADPH + O2 = 1,6-dihydroxyphenazine N(5)-oxide + NADP(+) + H2O. It catalyses the reaction 1,6-dihydroxyphenazine N(5)-oxide + NADPH + O2 = 1,6-dihydroxyphenazine N(5),N(10)-dioxide + NADP(+) + H2O. It carries out the reaction 1-hydroxy-6-methoxyphenazine + NADPH + O2 = 1-hydroxy-6-methoxyphenazine N(10)-oxide + NADP(+) + H2O. The catalysed reaction is quinolin-8-ol + NADPH + O2 = 8-hydroxyquinoline N-oxide + NADP(+) + H2O. Functionally, involved in the biosynthesis of phenazine natural products including myxin, an N(5),N(10)-dioxide phenazine antiobiotic, which has antimicrobial activity. Catalyzes the aromatic N-oxidations of phenazines, such as 1,6-dihydroxyphenazine (DHP), 1,6-dihydroxyphenazine N(5)-oxide (DHPO) and 1-hydroxy-6-methoxyphenazine to produce DHPO, iodinin (1,6-dihydroxyphenazine N(5),N(10)-dioxide) and 1-hydroxy-6-methoxyphenazine N(10)-oxide, respectively. Also catalyzes the N-oxidation of 8-hydroxyquinoline, but not 6-hydroxyquinoline (6-HQ), quinoline, quinoxaline, quinine and 2-phenylpyridine. In Lysobacter antibioticus, this protein is Phenazine N-monooxygenase PhzNO1.